We begin with the raw amino-acid sequence, 169 residues long: Peptide methionine sulfoxide reductase MsrA (169 aa).

Cys-10 is an active-site residue.

Belongs to the MsrA Met sulfoxide reductase family.

The enzyme catalyses L-methionyl-[protein] + [thioredoxin]-disulfide + H2O = L-methionyl-(S)-S-oxide-[protein] + [thioredoxin]-dithiol. It carries out the reaction [thioredoxin]-disulfide + L-methionine + H2O = L-methionine (S)-S-oxide + [thioredoxin]-dithiol. In terms of biological role, has an important function as a repair enzyme for proteins that have been inactivated by oxidation. Catalyzes the reversible oxidation-reduction of methionine sulfoxide in proteins to methionine. This chain is Peptide methionine sulfoxide reductase MsrA, found in Streptococcus pyogenes serotype M12 (strain MGAS2096).